The sequence spans 175 residues: uncharacterized protein (175 aa).

This is an uncharacterized protein from Connochaetes taurinus (Blue wildebeest).